Here is a 1349-residue protein sequence, read N- to C-terminus: Elongator complex protein 1 (1349 aa).

Phosphoserine is present on residues Ser529, Ser539, Ser551, Ser636, and Ser828. Positions 919 to 1349 (QDVNVVYKSA…DFPKSHIVDF (431 aa)) are mediates dimerization. 2 positions are modified to phosphoserine; by HRR25: Ser1198 and Ser1202. Phosphoserine is present on residues Ser1205 and Ser1209. Positions 1214-1228 (YTGKTGGTAKTGASR) are enriched in low complexity. The disordered stretch occupies residues 1214–1245 (YTGKTGGTAKTGASRRTAKNKRREERKRARGK). The required for binding to tRNA stretch occupies residues 1228–1246 (RRTAKNKRREERKRARGKK).

Belongs to the ELP1/IKA1 family. Homodimer; dimerization promotes ELP1/IKI3 stability and elongator complex formation. Component of the elongator complex which consists of ELP1/IKI3, ELP2, ELP3, ELP4, ELP5/IKI1 and ELP6. The elongator complex is composed of two copies of the Elp123 subcomplex (composed of ELP1/IKI3, ELP2 and ELP3) and two copies of the Elp456 subcomplex (composed of ELP4, ELP5/IKI1 and ELP6). The Elp123 subcomplex forms a two-lobed scaffold, which binds the Elp456 subcomplex asymmetrically. In the complex, ELP1/IKI3 interacts with ELP2. In each lobe, ELP2 is tightly sandwiched between ELP1/IKI3 and ELP3. The Elp123 subcomplex binds tRNA through ELP1/IKI3 and ELP3 and can bind 2 tRNAs simultaneously. tRNA-binding induces conformational rearrangements which precisely position the targeted anticodon base in the active site. The Elp456 subcomplex binds tRNA and has ATPase activity. ELP1/IKI3 interacts with HRR25 and KTI12. Interacts with KTI11/DPH3. Phosphorylation promotes the tRNA modification function of the elongator complex.

The protein localises to the cytoplasm. It localises to the nucleus. It participates in tRNA modification; 5-methoxycarbonylmethyl-2-thiouridine-tRNA biosynthesis. Functionally, component of the elongator complex which is required for multiple tRNA modifications, including mcm5U (5-methoxycarbonylmethyl uridine), mcm5s2U (5-methoxycarbonylmethyl-2-thiouridine), and ncm5U (5-carbamoylmethyl uridine). The elongator complex catalyzes formation of carboxymethyluridine in the wobble base at position 34 in tRNAs. Functions as a gamma-toxin target (TOT); disruption of the complex confers resistance to Kluyveromyces lactis toxin zymocin (pGKL1 killer toxin). May also be involved in sensitivity to Pichia inositovora toxin. ELP1/IKI3 binds to tRNA, mediating interaction of the elongator complex with tRNA. Independently, may be involved in polarized exocytosis. The polypeptide is Elongator complex protein 1 (IKI3) (Saccharomyces cerevisiae (strain ATCC 204508 / S288c) (Baker's yeast)).